Consider the following 340-residue polypeptide: S-adenosylmethionine:tRNA ribosyltransferase-isomerase (340 aa).

This sequence belongs to the QueA family. As to quaternary structure, monomer.

The protein resides in the cytoplasm. The catalysed reaction is 7-aminomethyl-7-carbaguanosine(34) in tRNA + S-adenosyl-L-methionine = epoxyqueuosine(34) in tRNA + adenine + L-methionine + 2 H(+). It functions in the pathway tRNA modification; tRNA-queuosine biosynthesis. In terms of biological role, transfers and isomerizes the ribose moiety from AdoMet to the 7-aminomethyl group of 7-deazaguanine (preQ1-tRNA) to give epoxyqueuosine (oQ-tRNA). This chain is S-adenosylmethionine:tRNA ribosyltransferase-isomerase, found in Chromobacterium violaceum (strain ATCC 12472 / DSM 30191 / JCM 1249 / CCUG 213 / NBRC 12614 / NCIMB 9131 / NCTC 9757 / MK).